The chain runs to 212 residues: Pyridoxine/pyridoxamine 5'-phosphate oxidase (212 aa).

Residues 7 to 10 (RREY) and Lys-66 contribute to the substrate site. FMN contacts are provided by residues 61 to 66 (RIVLLK), 76 to 77 (YT), Lys-83, and Gln-105. 3 residues coordinate substrate: Tyr-123, Arg-127, and Ser-131. FMN-binding positions include 140–141 (QS) and Trp-185. 191–193 (RLH) contacts substrate. Residue Arg-195 coordinates FMN.

The protein belongs to the pyridoxamine 5'-phosphate oxidase family. In terms of assembly, homodimer. The cofactor is FMN.

It carries out the reaction pyridoxamine 5'-phosphate + O2 + H2O = pyridoxal 5'-phosphate + H2O2 + NH4(+). The enzyme catalyses pyridoxine 5'-phosphate + O2 = pyridoxal 5'-phosphate + H2O2. It functions in the pathway cofactor metabolism; pyridoxal 5'-phosphate salvage; pyridoxal 5'-phosphate from pyridoxamine 5'-phosphate: step 1/1. The protein operates within cofactor metabolism; pyridoxal 5'-phosphate salvage; pyridoxal 5'-phosphate from pyridoxine 5'-phosphate: step 1/1. Catalyzes the oxidation of either pyridoxine 5'-phosphate (PNP) or pyridoxamine 5'-phosphate (PMP) into pyridoxal 5'-phosphate (PLP). This is Pyridoxine/pyridoxamine 5'-phosphate oxidase from Idiomarina loihiensis (strain ATCC BAA-735 / DSM 15497 / L2-TR).